Here is a 237-residue protein sequence, read N- to C-terminus: Oligoribonuclease, mitochondrial (237 aa).

The transit peptide at 1 to 25 (MLGGSLGSRLLRGVGGSHGRFGARG) directs the protein to the mitochondrion. The Exonuclease domain maps to 43–207 (MVWVDLEMTG…DDISESIKEL (165 aa)). Mg(2+) is bound by residues D47 and E49. Position 92 is a phosphoserine (S92). Y122 carries the post-translational modification Phosphotyrosine. D147 provides a ligand contact to Mg(2+). Residue K173 is modified to N6-acetyllysine. The active site involves H194. D199 contributes to the Mg(2+) binding site.

The protein belongs to the oligoribonuclease family. In terms of assembly, homodimer. Homotetramer. Mn(2+) is required as a cofactor. Requires Mg(2+) as cofactor. In terms of tissue distribution, highly expressed in the heart and at lower levels in the lymph nodes, brain, lung, liver, spleen and thymus.

The protein localises to the mitochondrion intermembrane space. Its subcellular location is the mitochondrion matrix. It is found in the mitochondrion. It localises to the cytoplasm. The protein resides in the nucleus. With respect to regulation, inhibited by adenosine 3',5'-bisphosphate. Functionally, 3'-to-5'exoribonuclease that preferentially degrades DNA and RNA oligonucleotides composed of only two nucleotides. Binds and degrades longer oligonucleotides with a lower affinity. Plays dual roles in mitochondria, scavenging nanoRNAs (small RNA oligonucleotides of &lt;5 nucleotides) that are produced by the degradosome and clearing short RNAs that are generated by RNA processing. Essential for correct initiation of mitochondrial transcription, degrading mitochondrial RNA dinucleotides to prevent RNA-primed transcription at non-canonical sites in the mitochondrial genome. Essential for embryonic development. Its function is as follows. 3'-to-5'exoribonuclease that preferentially degrades DNA and RNA oligonucleotides composed of only two nucleotides. The sequence is that of Oligoribonuclease, mitochondrial (REXO2) from Homo sapiens (Human).